The primary structure comprises 272 residues: Ribosomal RNA small subunit methyltransferase A (272 aa).

The S-adenosyl-L-methionine site is built by N18, L20, G45, E66, D91, and N113.

Belongs to the class I-like SAM-binding methyltransferase superfamily. rRNA adenine N(6)-methyltransferase family. RsmA subfamily.

The protein resides in the cytoplasm. It carries out the reaction adenosine(1518)/adenosine(1519) in 16S rRNA + 4 S-adenosyl-L-methionine = N(6)-dimethyladenosine(1518)/N(6)-dimethyladenosine(1519) in 16S rRNA + 4 S-adenosyl-L-homocysteine + 4 H(+). In terms of biological role, specifically dimethylates two adjacent adenosines (A1518 and A1519) in the loop of a conserved hairpin near the 3'-end of 16S rRNA in the 30S particle. May play a critical role in biogenesis of 30S subunits. In Yersinia pestis bv. Antiqua (strain Antiqua), this protein is Ribosomal RNA small subunit methyltransferase A.